Here is a 352-residue protein sequence, read N- to C-terminus: Dysbindin (352 aa).

Serine 11 carries the phosphoserine modification. The stretch at glutamate 88–glutamate 176 forms a coiled coil. The dysbindin stretch occupies residues leucine 173 to alanine 325. A Nuclear export signal motif is present at residues leucine 243–leucine 256. Positions serine 267–isoleucine 352 are disordered. Residues serine 274–isoleucine 285 are compositionally biased toward polar residues. Over residues proline 286–alanine 301 the composition is skewed to low complexity. 3 positions are modified to phosphoserine: serine 315, serine 340, and serine 343.

Belongs to the dysbindin family. In terms of assembly, interacts with AP3M1 and TRIM32. Interacts (isoform 1 and isoform 2 only) with the DNA-dependent protein kinase complex DNA-PK; the interaction phosphorylates DTNBP1 in vitro. Interacts directly in this complex with XRCC5 and XRCC6. Interacts with XPO1; the interaction exports DTNBP1 out of the nucleus. Component of the biogenesis of lysosome-related organelles complex 1 (BLOC-1) composed of BLOC1S1, BLOC1S2, BLOC1S3, BLOC1S4, BLOC1S5, BLOC1S6, DTNBP1/BLOC1S7 and SNAPIN/BLOC1S8. The BLOC-1 complex associates with the AP-3 protein complex and membrane protein cargos. This BLOC-1 complex also associates with the BLOC-2 complex in endosomes. Binds to DTNA and DTNB but may not be a physiological binding partner. Interacts (via its coiled coil domain) with KXD1. Interacts with AP3B2, BLOC1S5, BLOC1S6, CMYA5, PI4K2, RNF151 and SNAPIN/BLOC1S8. Interacts with XPO1; the interaction exports DTNBP1 out of the nucleus. Post-translationally, ubiquitinated by TRIM32. Ubiquitination leads to DTNBP1 degradation. As to expression, detected in brain, in hippocampus and dentate gyrus neurons. Detected at axon bundles and axon terminals, notably in the cerebellum and hippocampus. Detected in neuropil in hippocampus, lateral septum, basal ganglia and substantia nigra. Highly expressed in pyramidal cells of hippocampus CA2 and CA3. Detected at the heart and skeletal muscle sarcolemma (at protein level). Ubiquitously expressed. The highest expression is observed in testis, liver, kidney, brain, heart and lung. Expressed at lower levels in stomach and small intestine.

The protein resides in the cytoplasm. The protein localises to the cytoplasmic vesicle membrane. Its subcellular location is the endosome membrane. It localises to the melanosome membrane. It is found in the postsynaptic density. The protein resides in the endoplasmic reticulum. The protein localises to the nucleus. Its subcellular location is the cytoplasmic vesicle. It localises to the secretory vesicle. It is found in the synaptic vesicle membrane. The protein resides in the postsynaptic cell membrane. Its function is as follows. Component of the BLOC-1 complex, a complex that is required for normal biogenesis of lysosome-related organelles (LRO), such as platelet dense granules and melanosomes. In concert with the AP-3 complex, the BLOC-1 complex is required to target membrane protein cargos into vesicles assembled at cell bodies for delivery into neurites and nerve terminals. The BLOC-1 complex, in association with SNARE proteins, is also proposed to be involved in neurite extension. Associates with the BLOC-2 complex to facilitate the transport of TYRP1 independent of AP-3 function. Plays a role in synaptic vesicle trafficking and in neurotransmitter release. Plays a role in the regulation of cell surface exposure of DRD2. May play a role in actin cytoskeleton reorganization and neurite outgrowth. May modulate MAPK8 phosphorylation. Appears to promote neuronal transmission and viability through regulating the expression of SNAP25 and SYN1, modulating PI3-kinase-Akt signaling and influencing glutamatergic release. Regulates the expression of SYN1 through binding to its promoter. Modulates prefrontal cortical activity via the dopamine/D2 pathway. This Mus musculus (Mouse) protein is Dysbindin (Dtnbp1).